Here is a 528-residue protein sequence, read N- to C-terminus: Linear primary-alkylsulfatase (528 aa).

6 residues coordinate Zn(2+): His42, His44, Asp46, His47, Glu151, and Glu170. Sulfate-binding positions include 179 to 184 (NVHTLR) and Arg189. His213 contacts Zn(2+). A sulfate-binding site is contributed by Tyr275.

The protein belongs to the metallo-beta-lactamase superfamily. Type III sulfatase family. Zn(2+) is required as a cofactor.

It catalyses the reaction a primary linear alkyl sulfate ester + H2O = a primary alcohol + sulfate + H(+). Alkylsulfatase that cleaves the widely used detergent sodium dodecyl sulfate (SDS), which allows the bacterium to use SDS as a sole carbon or sulfur source. The polypeptide is Linear primary-alkylsulfatase (Pseudomonas sp. (strain ATCC 19151)).